The primary structure comprises 315 residues: AT-hook motif nuclear-localized protein 19 (315 aa).

Residues 1–25 (MANPWWTGQVNLSGLETTPPGSSQL) show a composition bias toward polar residues. Disordered regions lie at residues 1–104 (MANP…RDSP) and 239–285 (EEEA…YNMP). The span at 61–74 (DNLSGDDHEPREGA) shows a compositional bias: basic and acidic residues. The a.T hook DNA-binding region spans 80–92 (RRPRGRPAGSKNK). Residues 104-248 (PNALKSHVME…EEEAAERGGG (145 aa)) enclose the PPC domain. Over residues 245-276 (RGGGGGSGGVVPGQLGGGGSPLSSGAGGGDGN) the composition is skewed to gly residues.

In terms of tissue distribution, slightly expressed in roots.

It localises to the nucleus. Its function is as follows. Transcription factor that specifically binds AT-rich DNA sequences related to the nuclear matrix attachment regions (MARs). Negatively regulates plant innate immunity (PTI) to pathogens through the down-regulation of the PAMP-triggered FRK1 expression. Positively regulates defense against fungal Verticillium infection. This Arabidopsis thaliana (Mouse-ear cress) protein is AT-hook motif nuclear-localized protein 19.